We begin with the raw amino-acid sequence, 515 residues long: Probable cytochrome P450 4p3 (515 aa).

Heme contacts are provided by Glu322 and Cys461.

This sequence belongs to the cytochrome P450 family. Heme is required as a cofactor.

The protein localises to the endoplasmic reticulum membrane. It localises to the microsome membrane. Its function is as follows. May be involved in the metabolism of insect hormones and in the breakdown of synthetic insecticides. The polypeptide is Probable cytochrome P450 4p3 (Cyp4p3) (Drosophila melanogaster (Fruit fly)).